Here is a 508-residue protein sequence, read N- to C-terminus: UDP-N-acetylmuramoylalanine--D-glutamate ligase (508 aa).

138–144 (GTNGKTT) serves as a coordination point for ATP. The interval 294–314 (FDEPAPRRKKDAPPPTRAGGR) is disordered.

Belongs to the MurCDEF family.

It localises to the cytoplasm. It carries out the reaction UDP-N-acetyl-alpha-D-muramoyl-L-alanine + D-glutamate + ATP = UDP-N-acetyl-alpha-D-muramoyl-L-alanyl-D-glutamate + ADP + phosphate + H(+). It functions in the pathway cell wall biogenesis; peptidoglycan biosynthesis. Its function is as follows. Cell wall formation. Catalyzes the addition of glutamate to the nucleotide precursor UDP-N-acetylmuramoyl-L-alanine (UMA). The polypeptide is UDP-N-acetylmuramoylalanine--D-glutamate ligase (Bordetella parapertussis (strain 12822 / ATCC BAA-587 / NCTC 13253)).